The chain runs to 163 residues: Crossover junction endodeoxyribonuclease RuvC (163 aa).

Active-site residues include Asp-9, Glu-76, and Asp-148. Asp-9, Glu-76, and Asp-148 together coordinate Mg(2+).

It belongs to the RuvC family. As to quaternary structure, homodimer which binds Holliday junction (HJ) DNA. The HJ becomes 2-fold symmetrical on binding to RuvC with unstacked arms; it has a different conformation from HJ DNA in complex with RuvA. In the full resolvosome a probable DNA-RuvA(4)-RuvB(12)-RuvC(2) complex forms which resolves the HJ. Mg(2+) serves as cofactor.

The protein localises to the cytoplasm. The enzyme catalyses Endonucleolytic cleavage at a junction such as a reciprocal single-stranded crossover between two homologous DNA duplexes (Holliday junction).. In terms of biological role, the RuvA-RuvB-RuvC complex processes Holliday junction (HJ) DNA during genetic recombination and DNA repair. Endonuclease that resolves HJ intermediates. Cleaves cruciform DNA by making single-stranded nicks across the HJ at symmetrical positions within the homologous arms, yielding a 5'-phosphate and a 3'-hydroxyl group; requires a central core of homology in the junction. The consensus cleavage sequence is 5'-(A/T)TT(C/G)-3'. Cleavage occurs on the 3'-side of the TT dinucleotide at the point of strand exchange. HJ branch migration catalyzed by RuvA-RuvB allows RuvC to scan DNA until it finds its consensus sequence, where it cleaves and resolves the cruciform DNA. The chain is Crossover junction endodeoxyribonuclease RuvC from Nostoc punctiforme (strain ATCC 29133 / PCC 73102).